Here is a 563-residue protein sequence, read N- to C-terminus: (R)-mandelonitrile lyase 2 (563 aa).

The N-terminal stretch at 1–27 is a signal peptide; sequence MEKSTMSAILLVLYIFVLHLQYSEVHS. Residues 63–64, 82–83, valine 129, threonine 133, and 137–140 each bind FAD; these read TS, ER, and NAGV. 2 N-linked (GlcNAc...) asparagine glycosylation sites follow: asparagine 145 and asparagine 162. FAD is bound at residue valine 244. Residue cysteine 355 coordinates substrate. N-linked (GlcNAc...) asparagine glycans are attached at residues asparagine 379 and asparagine 419. Cysteine 426 and cysteine 477 are disulfide-bonded. Tyrosine 484 lines the substrate pocket. FAD-binding positions include 485-486 and glycine 514; that span reads WH. The active-site Proton donor is histidine 486. Histidine 524 functions as the Proton acceptor in the catalytic mechanism. Residue 525-526 participates in FAD binding; the sequence is PQ.

Belongs to the GMC oxidoreductase family. As to quaternary structure, monomer. It depends on FAD as a cofactor. Post-translationally, glycosylated. Deglycosylation does not affect the enzymatic activity.

It catalyses the reaction (R)-mandelonitrile = benzaldehyde + hydrogen cyanide. Functionally, involved in cyanogenesis, the release of HCN from injured tissues. Catalyzes the stereospecific addition of HCN to a variety of aldehydes in vitro. Has no oxidase activity. The redox properties of the FAD cofactor appear to be unimportant for catalysis. The chain is (R)-mandelonitrile lyase 2 (MDL2) from Prunus dulcis (Almond).